The sequence spans 396 residues: Tryptophan synthase beta chain (396 aa).

K86 is modified (N6-(pyridoxal phosphate)lysine).

Belongs to the TrpB family. As to quaternary structure, tetramer of two alpha and two beta chains. Pyridoxal 5'-phosphate is required as a cofactor.

The enzyme catalyses (1S,2R)-1-C-(indol-3-yl)glycerol 3-phosphate + L-serine = D-glyceraldehyde 3-phosphate + L-tryptophan + H2O. The protein operates within amino-acid biosynthesis; L-tryptophan biosynthesis; L-tryptophan from chorismate: step 5/5. In terms of biological role, the beta subunit is responsible for the synthesis of L-tryptophan from indole and L-serine. This is Tryptophan synthase beta chain from Vibrio atlanticus (strain LGP32) (Vibrio splendidus (strain Mel32)).